Consider the following 842-residue polypeptide: TATA box-binding protein-associated factor, RNA polymerase I, subunit C (842 aa).

3 disordered regions span residues Ser-574–Thr-605, Arg-667–Glu-690, and Gln-702–Phe-842. Over residues Arg-577–Ala-588 the composition is skewed to basic and acidic residues. The span at Asp-745–Ala-760 shows a compositional bias: polar residues. Over residues Gln-783–Met-794 the composition is skewed to basic and acidic residues. Phosphothreonine is present on Thr-808. Low complexity predominate over residues Pro-809–Pro-826. The segment covering Pro-833–Phe-842 has biased composition (basic residues).

Component of the transcription factor SL1/TIF-IB complex, composed of TBP and at least TAF1A, TAF1B, TAF1C and TAF1D. In the complex interacts directly with TBP, TAF1A and TAF1B. Interaction of the SL1/TIF-IB subunits with TBP excludes interaction of TBP with the transcription factor IID (TFIID) subunits. Interacts with MYC and RRN3. Interacts with p53/TP53; the interaction prevents the association of SL1/TIF-IB with UBTF and represses RNA polymerase I transcription. Part of Pol I pre-initiation complex (PIC), in which Pol I core assembles with RRN3 and promoter-bound UTBF and SL1/TIF-IB complex.

The protein resides in the nucleus. Its subcellular location is the nucleolus. Its function is as follows. Component of the transcription factor SL1/TIF-IB complex, which is involved in the assembly of the PIC (pre-initiation complex) during RNA polymerase I-dependent transcription. The rate of PIC formation probably is primarily dependent on the rate of association of SL1/TIF-IB with the rDNA promoter. SL1/TIF-IB is involved in stabilization of nucleolar transcription factor 1/UBTF on rDNA. Formation of SL1/TIF-IB excludes the association of TBP with TFIID subunits. Recruits RNA polymerase I to the rRNA gene promoter via interaction with RRN3. In Rattus norvegicus (Rat), this protein is TATA box-binding protein-associated factor, RNA polymerase I, subunit C (Taf1c).